We begin with the raw amino-acid sequence, 391 residues long: Sister chromatid cohesion protein DCC1 (391 aa).

It belongs to the DCC1 family. As to quaternary structure, component of the ctf18-RFC complex which consists of ctf18, ctf8, dscc1 and the RFC complex.

The protein localises to the nucleus. Loads pcna onto primed templates regulating velocity, spacing and restart activity of replication forks. May couple DNA replication to sister chromatid cohesion. This Xenopus tropicalis (Western clawed frog) protein is Sister chromatid cohesion protein DCC1 (dscc1).